The following is a 398-amino-acid chain: Tryptophan synthase beta chain (398 aa).

Residue Lys89 is modified to N6-(pyridoxal phosphate)lysine.

Belongs to the TrpB family. In terms of assembly, tetramer of two alpha and two beta chains. Requires pyridoxal 5'-phosphate as cofactor.

It catalyses the reaction (1S,2R)-1-C-(indol-3-yl)glycerol 3-phosphate + L-serine = D-glyceraldehyde 3-phosphate + L-tryptophan + H2O. It participates in amino-acid biosynthesis; L-tryptophan biosynthesis; L-tryptophan from chorismate: step 5/5. In terms of biological role, the beta subunit is responsible for the synthesis of L-tryptophan from indole and L-serine. The protein is Tryptophan synthase beta chain of Methanopyrus kandleri (strain AV19 / DSM 6324 / JCM 9639 / NBRC 100938).